We begin with the raw amino-acid sequence, 667 residues long: Protein angel homolog 1 (667 aa).

2 positions are modified to phosphoserine: S77 and S105.

Belongs to the CCR4/nocturin family.

In Mus musculus (Mouse), this protein is Protein angel homolog 1.